A 1183-amino-acid chain; its full sequence is SRC kinase signaling inhibitor 1 (1183 aa).

The segment at 1–44 (MGNAPSQDPERSSPPMLSADDAEYPREYRTLGGGGGGGSGGRRF) is disordered. 2 positions are modified to phosphoserine: Ser-13 and Ser-18. Positions 31 to 41 (LGGGGGGGSGG) are enriched in gly residues. Ser-45 bears the Phosphoserine mark. Thr-52 is subject to Phosphothreonine. Phosphoserine is present on residues Ser-53, Ser-64, Ser-143, Ser-165, Ser-169, Ser-179, and Ser-225. Position 241 is a phosphotyrosine (Tyr-241). A disordered region spans residues 284–379 (ASRESSPTRR…ERRDVKPDED (96 aa)). The span at 286–296 (RESSPTRRLNN) shows a compositional bias: polar residues. Low complexity predominate over residues 297–306 (LSPAPHLASG). Ser-298, Ser-307, and Ser-324 each carry phosphoserine. The span at 313–331 (PSGLPSGLQSGSPSRSRLS) shows a compositional bias: low complexity. Residues Arg-329 and Arg-336 each carry the omega-N-methylarginine modification. A phosphoserine mark is found at Ser-343, Ser-362, and Ser-364. Basic and acidic residues predominate over residues 369–379 (LERRDVKPDED). The residue at position 396 (Tyr-396) is a Phosphotyrosine. The tract at residues 466–643 (YGFRLPPSSP…ASSTPAGQPT (178 aa)) is disordered. Positions 485 to 497 (PGGPPPPHSPYSG) are enriched in pro residues. Ser-493, Ser-496, and Ser-500 each carry phosphoserine. Arg-501 carries the omega-N-methylarginine modification. A phosphoserine mark is found at Ser-503, Ser-513, Ser-515, Ser-517, and Ser-522. A compositionally biased stretch (low complexity) spans 524–541 (GGKTRSAGSASTAGAPPS). The span at 562–574 (KDTETRERMEAME) shows a compositional bias: basic and acidic residues. Phosphoserine occurs at positions 598 and 621. A phosphothreonine mark is found at Thr-624 and Thr-637. Positions 634-643 (ASSTPAGQPT) are enriched in low complexity. The segment at 647–697 (RLQMQLHLRGLQNSASDLRGQLQQLRKLQLQNQESVRALLKRTEAELSMRV) is interaction with SNAP25. Coiled coils occupy residues 654 to 674 (LRGL…LRKL) and 726 to 746 (EELI…IQRD). 3 positions are modified to phosphoserine: Ser-844, Ser-857, and Ser-866. 2 disordered regions span residues 861 to 907 (EMPP…KAVS) and 949 to 1032 (DCAS…VTSK). At Thr-884 the chain carries Phosphothreonine. Ser-987 carries the post-translational modification Phosphoserine. A compositionally biased stretch (pro residues) spans 1002–1011 (KSPPPPPPRR). Ser-1043 and Ser-1060 each carry phosphoserine. Disordered stretches follow at residues 1058–1081 (AVSE…DEDD) and 1105–1183 (GASR…SISF). The span at 1135-1183 (QAQQQATKPSKEMSGSNETSSPVSEKPSASRTSIPVLTSFGARNSSISF) shows a compositional bias: polar residues.

Belongs to the SRCIN1 family. As to quaternary structure, interacts with the N-terminal coiled-coil region of SNAP25. Interacts with BCAR1/p130Cas and SRC through its C-terminal domain. Interacts with CSK, CTTN, SORBS3/vinexin, SYP and MAPRE3/EB3. Post-translationally, tyrosine-phosphorylated in response to EGF and to cell adhesion to integrin ligands. Expressed in some primary breast carcinomas where its presence is significantly associated with increased tumor size. Not detected in normal breast tissue.

The protein resides in the cytoplasm. Its subcellular location is the cytoskeleton. It localises to the cell projection. The protein localises to the axon. It is found in the dendrite. The protein resides in the presynapse. Its subcellular location is the postsynapse. It localises to the postsynaptic density. Its function is as follows. Acts as a negative regulator of SRC by activating CSK which inhibits SRC activity and downstream signaling, leading to impaired cell spreading and migration. Regulates dendritic spine morphology. Involved in calcium-dependent exocytosis. May play a role in neurotransmitter release or synapse maintenance. The polypeptide is SRC kinase signaling inhibitor 1 (Homo sapiens (Human)).